The chain runs to 131 residues: Single-stranded DNA-binding protein 1 (131 aa).

Residues 1–103 (MYNKVIAIGR…VLCQSFQLLE (103 aa)) form the SSB domain.

As to quaternary structure, homotetramer.

This chain is Single-stranded DNA-binding protein 1 (ssb1), found in Streptococcus pyogenes serotype M6 (strain ATCC BAA-946 / MGAS10394).